The sequence spans 451 residues: Vacuolar cation/proton exchanger 1a (451 aa).

Topologically, residues 1-58 (MEAAAAMEAGRKLAARHPHGRSRTAHNMSSSSLRKKSDAALVRKVPVAPLRPLLANLQ) are cytoplasmic. The disordered stretch occupies residues 9-37 (AGRKLAARHPHGRSRTAHNMSSSSLRKKS). Residues 13–24 (LAARHPHGRSRT) are compositionally biased toward basic residues. A helical membrane pass occupies residues 59 to 79 (EVFLATKLAVLFPAVPLAIAA). Topologically, residues 80 to 86 (QCFRFDQ) are vacuolar. Residues 87–107 (VWVFALSLLGLIPLAERVSFL) form a helical membrane-spanning segment. The Cytoplasmic portion of the chain corresponds to 108 to 120 (TEQIALYTGPTVG). Residues 121–141 (GLLNATCGNATELIIALFALL) traverse the membrane as a helical segment. The tract at residues 128-163 (GNATELIIALFALLKGKIEVVKCSLLGSVLSNLLLV) is cation selection. Residues 142–153 (KGKIEVVKCSLL) are Vacuolar-facing. The helical transmembrane segment at 154–174 (GSVLSNLLLVLGTSLFCGGVV) threads the bilayer. Topologically, residues 175–191 (NLGARQPYDRNQSDVST) are cytoplasmic. The chain crosses the membrane as a helical span at residues 192–212 (ALLFLAVLCHSAPLLLRYAVA). The Vacuolar segment spans residues 213-228 (AGEHSVSATSAAASLD). A helical membrane pass occupies residues 229–249 (LSRACSFVMLASYVAYLFFQL). Over 250–273 (KTHRQLFEPQEVDGGDAGDDDEEP) the chain is Cytoplasmic. Residues 274–294 (ALGFASALFWLALMTAVISVL) traverse the membrane as a helical segment. Residues 295 to 317 (SEYVVGTIEPTSQSWGLSVSFIS) are Vacuolar-facing. Residues 318–338 (IILLPIVGNAAEHAGAIIFAL) traverse the membrane as a helical segment. The cation selection stretch occupies residues 325–360 (GNAAEHAGAIIFALKNKLDITLGVALGSATQISMFV). The Cytoplasmic segment spans residues 339 to 352 (KNKLDITLGVALGS). A helical membrane pass occupies residues 353–373 (ATQISMFVVPLSVLVAWIMGV). The Vacuolar portion of the chain corresponds to 374-378 (QMDLD). A helical transmembrane segment spans residues 379–399 (FKLLETGSLFMAVLVTAFTLQ). The Cytoplasmic portion of the chain corresponds to 400–404 (DGTSH). The helical transmembrane segment at 405 to 425 (YLKGILLLLCYIVIGACFFVA) threads the bilayer. The Vacuolar portion of the chain corresponds to 426 to 451 (RQPAGHANSNGALLDVPTGSMSVQAA).

The protein belongs to the Ca(2+):cation antiporter (CaCA) (TC 2.A.19) family. Cation/proton exchanger (CAX) subfamily. As to expression, ubiquitous.

Its subcellular location is the vacuole membrane. Its function is as follows. Vacuolar cation/proton exchanger (CAX). Translocates Ca(2+) and other metal ions into vacuoles using the proton gradient formed by H(+)-ATPase and H(+)-pyrophosphatase. This Oryza sativa subsp. japonica (Rice) protein is Vacuolar cation/proton exchanger 1a (CAX1a).